The sequence spans 159 residues: MFRLLVLAACLAISVHAYSDGAPKAACRDLTPQHGAKLQVTKPPYSISGPSHVRSDQKLTLTLGGDEFLGFMIQARDGQNRVVGQFQVVDSVHSQTLDCSGKDDTITHLSAQKGKPLTGITFDWIPPAGYKGNVKFMATVVQTGFVYWVGRVTKDIDVE.

Positions 1-17 are cleaved as a signal peptide; it reads MFRLLVLAACLAISVHA. Residues 18-159 form the Reelin domain; that stretch reads YSDGAPKAAC…GRVTKDIDVE (142 aa). The cysteines at positions 27 and 99 are disulfide-linked.

Belongs to the insect defense protein family.

The protein resides in the secreted. May have antimicrobial activity. A late response immune regulated gene that is negatively regulated by spz during the immune response. This Drosophila melanogaster (Fruit fly) protein is Defense protein l(2)34Fc (l(2)34Fc).